We begin with the raw amino-acid sequence, 76 residues long: ATP synthase subunit c (76 aa).

2 helical membrane passes run 8–28 and 55–75; these read LLAA…GVGI and VAFA…LIFV.

This sequence belongs to the ATPase C chain family. F-type ATPases have 2 components, F(1) - the catalytic core - and F(0) - the membrane proton channel. F(1) has five subunits: alpha(3), beta(3), gamma(1), delta(1), epsilon(1). F(0) has three main subunits: a(1), b(2) and c(10-14). The alpha and beta chains form an alternating ring which encloses part of the gamma chain. F(1) is attached to F(0) by a central stalk formed by the gamma and epsilon chains, while a peripheral stalk is formed by the delta and b chains.

The protein resides in the cell membrane. F(1)F(0) ATP synthase produces ATP from ADP in the presence of a proton or sodium gradient. F-type ATPases consist of two structural domains, F(1) containing the extramembraneous catalytic core and F(0) containing the membrane proton channel, linked together by a central stalk and a peripheral stalk. During catalysis, ATP synthesis in the catalytic domain of F(1) is coupled via a rotary mechanism of the central stalk subunits to proton translocation. In terms of biological role, key component of the F(0) channel; it plays a direct role in translocation across the membrane. A homomeric c-ring of between 10-14 subunits forms the central stalk rotor element with the F(1) delta and epsilon subunits. The protein is ATP synthase subunit c of Dehalococcoides mccartyi (strain ATCC BAA-2266 / KCTC 15142 / 195) (Dehalococcoides ethenogenes (strain 195)).